Here is a 143-residue protein sequence, read N- to C-terminus: Peptide methionine sulfoxide reductase MsrB (143 aa).

The MsrB domain occupies 5-126; it reads KEEKIKSLNR…NSAALRFVPK (122 aa). Cys-115 functions as the Nucleophile in the catalytic mechanism.

It belongs to the MsrB Met sulfoxide reductase family.

It catalyses the reaction L-methionyl-[protein] + [thioredoxin]-disulfide + H2O = L-methionyl-(R)-S-oxide-[protein] + [thioredoxin]-dithiol. The chain is Peptide methionine sulfoxide reductase MsrB from Bacillus subtilis (strain 168).